A 498-amino-acid polypeptide reads, in one-letter code: ATP synthase subunit beta, chloroplastic (498 aa).

Residue 172 to 179 participates in ATP binding; the sequence is GGAGVGKT.

Belongs to the ATPase alpha/beta chains family. As to quaternary structure, F-type ATPases have 2 components, CF(1) - the catalytic core - and CF(0) - the membrane proton channel. CF(1) has five subunits: alpha(3), beta(3), gamma(1), delta(1), epsilon(1). CF(0) has four main subunits: a(1), b(1), b'(1) and c(9-12).

The protein localises to the plastid. It is found in the chloroplast thylakoid membrane. It catalyses the reaction ATP + H2O + 4 H(+)(in) = ADP + phosphate + 5 H(+)(out). Produces ATP from ADP in the presence of a proton gradient across the membrane. The catalytic sites are hosted primarily by the beta subunits. The chain is ATP synthase subunit beta, chloroplastic from Morus indica (Mulberry).